We begin with the raw amino-acid sequence, 226 residues long: Pyridoxal 5'-phosphate synthase subunit Pdx2 (226 aa).

52 to 54 (GES) lines the L-glutamine pocket. The Nucleophile role is filled by Cys-87. Residues Arg-124 and 156 to 157 (IR) contribute to the L-glutamine site. Residues His-199 and Glu-201 each act as charge relay system in the active site.

This sequence belongs to the glutaminase PdxT/SNO family. As to quaternary structure, in the presence of PdxS, forms a dodecamer of heterodimers. Only shows activity in the heterodimer.

It carries out the reaction aldehydo-D-ribose 5-phosphate + D-glyceraldehyde 3-phosphate + L-glutamine = pyridoxal 5'-phosphate + L-glutamate + phosphate + 3 H2O + H(+). It catalyses the reaction L-glutamine + H2O = L-glutamate + NH4(+). It participates in cofactor biosynthesis; pyridoxal 5'-phosphate biosynthesis. Catalyzes the hydrolysis of glutamine to glutamate and ammonia as part of the biosynthesis of pyridoxal 5'-phosphate. The resulting ammonia molecule is channeled to the active site of PdxS. This is Pyridoxal 5'-phosphate synthase subunit Pdx2 from Plasmodium berghei.